Consider the following 759-residue polypeptide: MSLSEPDHELVVAELGREPTAAEVALFENLWSEHCAYRSSRPLLSAFESEGDQVVVGPGDDAAVLALPEPDAADTPAAERDADDYGDQYVTFGVESHNHPSFVDPVDGAATGVGGIVRDTMSMGAYPIALLDSLYFGGFDRERSRYLFEGVVEGISHYGNCIGVPTVGGSVAFHDGYEGNPLVNVACVGLTNEDRLVTATAQEPGNTLMLVGNGTGRDGLGGASFASEDLAEDAETEDRPAVQVGDPYAEKRLIECNEALVDEDLVLSARDLGAAGLGGASSELVAKGGLGARLDLDSVHQREPNMNAMEILLAESQERMCYEVAPEDVARVEALAERFDLGCSVIGEVTDGNYVCEFAGAGKGEDDADDSDAESEVVVDVDAEYLADGAPMNDLASESPTQPDRDLPDPEPSLDEAVESVVSAPSTASKRWVYRQYDHEVGVRTAMKPGDDAAIMAIRETASTDAADLAPADQGVGLALSSGANPNWTETDPYEGARAVALENATNLAAKGAVPLAAVDCLNGGNPEKPEVYGGFKGIVDGLADACADLDAPVVGGNVSLYNDSVEGPIPPTPTLALIGTRKGYNAPPAALDADSAGDSELLLIGAGGADGGALGGSEYLAQAGGTDRFPTLPDTETKSLADRVASLAAVARHESTFATHDVSDGGLAVALAELVTDAAGADVTLPDRVAVFEETPGRLVVQTTDPEAVAELAGELPVLRLGEVTTDGALSLSVGDDETAFDADTIRELRGVIDRELA.

His34 is a catalytic residue. ATP is bound at residue Tyr37. Residue Glu95 participates in Mg(2+) binding. Substrate contacts are provided by residues 96–99 and Arg118; that span reads SHNH. Residue His97 is the Proton acceptor of the active site. Asp119 lines the Mg(2+) pocket. Gln243 provides a ligand contact to substrate. Asp271 is a Mg(2+) binding site. 315-317 provides a ligand contact to substrate; the sequence is ESQ. The tract at residues 388-422 is disordered; sequence DGAPMNDLASESPTQPDRDLPDPEPSLDEAVESVV. ATP is bound by residues Asp520 and Gly557. Mg(2+) is bound at residue Asn558. Substrate is bound at residue Ser560.

This sequence belongs to the FGAMS family. In terms of assembly, monomer. Part of the FGAM synthase complex composed of 1 PurL, 1 PurQ and 2 PurS subunits.

The protein resides in the cytoplasm. The enzyme catalyses N(2)-formyl-N(1)-(5-phospho-beta-D-ribosyl)glycinamide + L-glutamine + ATP + H2O = 2-formamido-N(1)-(5-O-phospho-beta-D-ribosyl)acetamidine + L-glutamate + ADP + phosphate + H(+). It functions in the pathway purine metabolism; IMP biosynthesis via de novo pathway; 5-amino-1-(5-phospho-D-ribosyl)imidazole from N(2)-formyl-N(1)-(5-phospho-D-ribosyl)glycinamide: step 1/2. Part of the phosphoribosylformylglycinamidine synthase complex involved in the purines biosynthetic pathway. Catalyzes the ATP-dependent conversion of formylglycinamide ribonucleotide (FGAR) and glutamine to yield formylglycinamidine ribonucleotide (FGAM) and glutamate. The FGAM synthase complex is composed of three subunits. PurQ produces an ammonia molecule by converting glutamine to glutamate. PurL transfers the ammonia molecule to FGAR to form FGAM in an ATP-dependent manner. PurS interacts with PurQ and PurL and is thought to assist in the transfer of the ammonia molecule from PurQ to PurL. The chain is Phosphoribosylformylglycinamidine synthase subunit PurL from Halorubrum lacusprofundi (strain ATCC 49239 / DSM 5036 / JCM 8891 / ACAM 34).